The chain runs to 113 residues: ATP-dependent Clp protease adapter protein ClpS (113 aa).

The protein belongs to the ClpS family. As to quaternary structure, binds to the N-terminal domain of the chaperone ClpA.

Its function is as follows. Involved in the modulation of the specificity of the ClpAP-mediated ATP-dependent protein degradation. This is ATP-dependent Clp protease adapter protein ClpS from Leptospira biflexa serovar Patoc (strain Patoc 1 / Ames).